Consider the following 506-residue polypeptide: RNA-splicing ligase RtcB homolog (506 aa).

Residues aspartate 120, cysteine 123, histidine 228, histidine 260, and histidine 354 each contribute to the Mn(2+) site. 227–231 is a binding site for GMP; sequence NHYAE. Residues 354-355, 403-406, serine 410, 429-432, and lysine 505 each bind GMP; these read HN, GGSM, and HGAG. Histidine 429 serves as the catalytic GMP-histidine intermediate.

This sequence belongs to the RtcB family. In terms of assembly, catalytic component of the tRNA-splicing ligase complex. It depends on Mn(2+) as a cofactor.

The enzyme catalyses a 3'-end 3'-phospho-ribonucleotide-RNA + a 5'-end dephospho-ribonucleoside-RNA + GTP = a ribonucleotidyl-ribonucleotide-RNA + GMP + diphosphate. The catalysed reaction is a 3'-end 2',3'-cyclophospho-ribonucleotide-RNA + a 5'-end dephospho-ribonucleoside-RNA + GTP + H2O = a ribonucleotidyl-ribonucleotide-RNA + GMP + diphosphate + H(+). In terms of biological role, catalytic subunit of the tRNA-splicing ligase complex that acts by directly joining spliced tRNA halves to mature-sized tRNAs by incorporating the precursor-derived splice junction phosphate into the mature tRNA as a canonical 3',5'-phosphodiester. May act as an RNA ligase with broad substrate specificity, and may function toward other RNAs. In Aedes aegypti (Yellowfever mosquito), this protein is RNA-splicing ligase RtcB homolog.